Reading from the N-terminus, the 208-residue chain is Ras-related protein M-Ras (208 aa).

Positions 21, 22, 23, 24, 25, 26, 27, 28, 38, 39, 40, 42, 44, and 45 each coordinate GTP. Ser-27 contacts Mg(2+). The short motif at 42–50 (YDPTIEDSY) is the Effector region element. Positions 45 and 67 each coordinate Mg(2+). GTP-binding residues include Gly-70, Asn-126, Lys-127, Asp-129, Ser-156, Ala-157, and Lys-158. Position 205 is a cysteine methyl ester (Cys-205). A lipid anchor (S-geranylgeranyl cysteine) is attached at Cys-205. The propeptide at 206–208 (VIL) is removed in mature form.

This sequence belongs to the small GTPase superfamily. Ras family. In terms of assembly, component of the SHOC2-MRAS-PP1c (SMP) holophosphatase complex consisting of SHOC2, GTP-bound M-Ras/MRAS and the catalytic subunit of protein phosphatase 1 (either PPP1CA, PPP1CB or PPP1CC). Interacts (active GTP-bound form) with both SHOC2 and PP1c (all isoforms) to form a tertiary complex; SHOC2 and PP1c preferably bind M-Ras/MRAS, but they also bind K-Ras/KRAS, N-Ras/NRAS and H-Ras/HRAS. Interacts with RGL3. Interacts (active GTP-bound form preferentially) with RGS14. It depends on Mg(2+) as a cofactor. In terms of tissue distribution, expressed in skeletal muscle cells.

The protein resides in the cell membrane. It carries out the reaction GTP + H2O = GDP + phosphate + H(+). In terms of biological role, signal transducer in the Ras-MAPK signaling pathway that regulates cell proliferation and survival. Core component of the SHOC2-MRAS-PP1c (SMP) holophosphatase complex that regulates the MAPK pathway activation. The formation of the SMP complex only occurs when MRAS is GTP-bound. MRAS has low intrinsic GTPase activity and may require additional factors for activation. The SMP complex specifically dephosphorylates the inhibitory phosphorylation at 'Ser-259' of RAF1 kinase, 'Ser-365' of BRAF kinase and 'Ser-214' of ARAF kinase, stimulating their kinase activities. This Rattus norvegicus (Rat) protein is Ras-related protein M-Ras (Mras).